Consider the following 299-residue polypeptide: Taste receptor type 2 member 5 (299 aa).

Residue M1 is a topological domain, extracellular. The helical transmembrane segment at 2-22 (LSAGLGLLMLVAVVEFLIGLI) threads the bilayer. Topologically, residues 23–45 (GNGVLVVWSFREWIRKFSWSSYN) are cytoplasmic. The chain crosses the membrane as a helical span at residues 46 to 66 (LIILGLAGCRFVLQWLIILDL). Residues 67-82 (SLFPLFQSSRWLRYLS) lie on the Extracellular side of the membrane. The chain crosses the membrane as a helical span at residues 83 to 103 (IFWVLVSQASLWFATFLSVFY). Over 104–127 (CKKITTFDHPAYLWLKQRAYNLSL) the chain is Cytoplasmic. The helical transmembrane segment at 128–148 (WCLLGYFIINLLLTVQIGLMF) threads the bilayer. Residues 149 to 175 (YHPPQGNSSIRYPFESWQYLYAFRLNS) are Extracellular-facing. Residue N155 is glycosylated (N-linked (GlcNAc...) asparagine). Residues 176–196 (GSYLPLMVFLVSSGMLIVSLY) traverse the membrane as a helical segment. Residues 197–223 (THHKKMKVHSAGRRDVRAKAHITALKS) lie on the Cytoplasmic side of the membrane. The helical transmembrane segment at 224–244 (LGCFLLLHLVYIMASPFSIAS) threads the bilayer. Over 245-253 (KTYPPDLTS) the chain is Extracellular. Residues 254–274 (VFIWETLMAAYPSLHSLILIM) traverse the membrane as a helical segment. At 275-299 (GIPRVKQTCQKIXWKTVCARRCWGP) the chain is on the cytoplasmic side.

It belongs to the G-protein coupled receptor T2R family.

Its subcellular location is the membrane. In terms of biological role, receptor that may play a role in the perception of bitterness and is gustducin-linked. May play a role in sensing the chemical composition of the gastrointestinal content. The activity of this receptor may stimulate alpha gustducin, mediate PLC-beta-2 activation and lead to the gating of TRPM5. This is Taste receptor type 2 member 5 (TAS2R5) from Pan troglodytes (Chimpanzee).